The following is a 155-amino-acid chain: SsrA-binding protein (155 aa).

The protein belongs to the SmpB family.

It is found in the cytoplasm. In terms of biological role, required for rescue of stalled ribosomes mediated by trans-translation. Binds to transfer-messenger RNA (tmRNA), required for stable association of tmRNA with ribosomes. tmRNA and SmpB together mimic tRNA shape, replacing the anticodon stem-loop with SmpB. tmRNA is encoded by the ssrA gene; the 2 termini fold to resemble tRNA(Ala) and it encodes a 'tag peptide', a short internal open reading frame. During trans-translation Ala-aminoacylated tmRNA acts like a tRNA, entering the A-site of stalled ribosomes, displacing the stalled mRNA. The ribosome then switches to translate the ORF on the tmRNA; the nascent peptide is terminated with the 'tag peptide' encoded by the tmRNA and targeted for degradation. The ribosome is freed to recommence translation, which seems to be the essential function of trans-translation. The sequence is that of SsrA-binding protein from Streptococcus equi subsp. equi (strain 4047).